A 238-amino-acid chain; its full sequence is Thiamine import ATP-binding protein ThiQ (238 aa).

The ABC transporter domain occupies 1 to 234 (MSSTALAVKG…RDIAAINRFL (234 aa)). Residue 36 to 43 (GASGSGKS) participates in ATP binding.

Belongs to the ABC transporter superfamily. Thiamine importer (TC 3.A.1.19.1) family. The complex is composed of two ATP-binding proteins (ThiQ), two transmembrane proteins (ThiP) and a solute-binding protein (ThiB).

It localises to the cell inner membrane. The enzyme catalyses thiamine(out) + ATP + H2O = thiamine(in) + ADP + phosphate + H(+). Functionally, part of the ABC transporter complex ThiBPQ involved in thiamine import. Responsible for energy coupling to the transport system. The chain is Thiamine import ATP-binding protein ThiQ from Rhizobium meliloti (strain 1021) (Ensifer meliloti).